The primary structure comprises 547 residues: Chaperonin GroEL (547 aa).

ATP contacts are provided by residues 29 to 32, 86 to 90, glycine 413, 479 to 481, and aspartate 495; these read TLGP, DGTTT, and NAA.

It belongs to the chaperonin (HSP60) family. As to quaternary structure, forms a cylinder of 14 subunits composed of two heptameric rings stacked back-to-back. Interacts with the co-chaperonin GroES.

It is found in the cytoplasm. It carries out the reaction ATP + H2O + a folded polypeptide = ADP + phosphate + an unfolded polypeptide.. In terms of biological role, together with its co-chaperonin GroES, plays an essential role in assisting protein folding. The GroEL-GroES system forms a nano-cage that allows encapsulation of the non-native substrate proteins and provides a physical environment optimized to promote and accelerate protein folding. This Synechococcus sp. (strain RCC307) protein is Chaperonin GroEL.